The primary structure comprises 858 residues: Bifunctional uridylyltransferase/uridylyl-removing enzyme (858 aa).

Residues 1-324 form a uridylyltransferase region; the sequence is MSAHAAPSPE…PATSGITRVL (324 aa). Residues 325 to 681 form a uridylyl-removing region; that stretch reads SADRFVEKQG…ARPSPIGDAL (357 aa). In terms of domain architecture, HD spans 443–565; sequence VDQHILMVLR…VGNERYLTAL (123 aa). ACT domains follow at residues 682-763 and 790-858; these read QVLV…PSKG and ILSV…AIAV.

This sequence belongs to the GlnD family. Mg(2+) serves as cofactor.

It carries out the reaction [protein-PII]-L-tyrosine + UTP = [protein-PII]-uridylyl-L-tyrosine + diphosphate. It catalyses the reaction [protein-PII]-uridylyl-L-tyrosine + H2O = [protein-PII]-L-tyrosine + UMP + H(+). Uridylyltransferase (UTase) activity is inhibited by glutamine, while glutamine activates uridylyl-removing (UR) activity. Modifies, by uridylylation and deuridylylation, the PII regulatory proteins (GlnB and homologs), in response to the nitrogen status of the cell that GlnD senses through the glutamine level. Under low glutamine levels, catalyzes the conversion of the PII proteins and UTP to PII-UMP and PPi, while under higher glutamine levels, GlnD hydrolyzes PII-UMP to PII and UMP (deuridylylation). Thus, controls uridylylation state and activity of the PII proteins, and plays an important role in the regulation of nitrogen assimilation and metabolism. The polypeptide is Bifunctional uridylyltransferase/uridylyl-removing enzyme (Burkholderia orbicola (strain AU 1054)).